We begin with the raw amino-acid sequence, 463 residues long: Nuclear hormone receptor family member nhr-3 (463 aa).

Positions 50-125 (STICSVCCDE…VGMEPDAIRP (76 aa)) form a DNA-binding region, nuclear receptor. 2 consecutive NR C4-type zinc fingers follow at residues 53–73 (CSVC…CFGC) and 89–113 (CRYS…FQKC). The segment covering 121-131 (DAIRPDRDKTG) has biased composition (basic and acidic residues). The tract at residues 121–143 (DAIRPDRDKTGRQKNPRRNTEGS) is disordered. Residues 199 to 462 (EIENIVIQLQ…VLEELLFLDR (264 aa)) enclose the NR LBD domain.

Belongs to the nuclear hormone receptor family.

The protein resides in the nucleus. Its function is as follows. Orphan nuclear receptor. The chain is Nuclear hormone receptor family member nhr-3 (nhr-3) from Caenorhabditis elegans.